A 51-amino-acid chain; its full sequence is Zinc metalloproteinase-disintegrin-like crovidisin (51 aa).

Residues 1 to 12 (AMVTKNNGDLDK) form the Peptidase M12B domain. The Disintegrin domain occupies 13–18 (SGTECR). Asparagine 29 carries N-linked (GlcNAc...) asparagine glycosylation.

This sequence belongs to the venom metalloproteinase (M12B) family. P-III subfamily. P-IIIa sub-subfamily. In terms of assembly, monomer. The cofactor is Zn(2+). Expressed by the venom gland.

It localises to the secreted. Its function is as follows. Snake venom zinc metalloproteinase-disintegrin-like that blocks the interaction between platelets and collagen fibers through its binding to collagen fibers, resulting in the blockade of collagen-mediated platelet functions such as adhesion, release reaction, thromboxane formation, and aggregation. Binds selectively to collagen type I with high affinity. Also exerts proteolytic activity to matrix. The protein is Zinc metalloproteinase-disintegrin-like crovidisin of Crotalus viridis viridis (Prairie rattlesnake).